The sequence spans 616 residues: Proline dehydrogenase 1, mitochondrial (616 aa).

It belongs to the proline oxidase family. FAD serves as cofactor.

The protein localises to the mitochondrion matrix. It carries out the reaction L-proline + a quinone = (S)-1-pyrroline-5-carboxylate + a quinol + H(+). It functions in the pathway amino-acid degradation; L-proline degradation into L-glutamate; L-glutamate from L-proline: step 1/2. Functionally, converts proline to delta-1-pyrroline-5-carboxylate. Through proline catabolism, promotes reactive oxygen species (ROS) production and the transcription of skn-1 target genes in response to bacterial infection by P.aeruginosa. The sequence is that of Proline dehydrogenase 1, mitochondrial from Caenorhabditis elegans.